The following is a 446-amino-acid chain: Tol-Pal system protein TolB (446 aa).

A signal peptide spans 1–43 (MRKLWAPNWLSRRQNANPTRDQSRHALMAWLAAALMSAGAAHA).

This sequence belongs to the TolB family. As to quaternary structure, the Tol-Pal system is composed of five core proteins: the inner membrane proteins TolA, TolQ and TolR, the periplasmic protein TolB and the outer membrane protein Pal. They form a network linking the inner and outer membranes and the peptidoglycan layer.

Its subcellular location is the periplasm. Part of the Tol-Pal system, which plays a role in outer membrane invagination during cell division and is important for maintaining outer membrane integrity. The sequence is that of Tol-Pal system protein TolB from Cupriavidus metallidurans (strain ATCC 43123 / DSM 2839 / NBRC 102507 / CH34) (Ralstonia metallidurans).